We begin with the raw amino-acid sequence, 319 residues long: Probable NAD(P)H-dependent D-xylose reductase xyl1 (319 aa).

An N-linked (GlcNAc...) asparagine glycan is attached at Asn-26. The active-site Proton donor is the Tyr-50. Substrate is bound at residue His-112. Asn-141 and Asn-167 each carry an N-linked (GlcNAc...) asparagine glycan. Residues 166–167, 215–224, and 271–281 contribute to the NAD(+) site; these read SN, SSFGPLSFLE, and KSNNPQRLKQN.

The protein belongs to the aldo/keto reductase family.

The catalysed reaction is xylitol + NAD(+) = D-xylose + NADH + H(+). It catalyses the reaction xylitol + NADP(+) = D-xylose + NADPH + H(+). It participates in carbohydrate metabolism; D-xylose degradation. Functionally, catalyzes the initial reaction in the xylose utilization pathway by reducing D-xylose into xylitol. Xylose is a major component of hemicelluloses such as xylan. Most fungi utilize D-xylose via three enzymatic reactions, xylose reductase (XR), xylitol dehydrogenase (XDH), and xylulokinase, to form xylulose 5-phosphate, which enters pentose phosphate pathway. This chain is Probable NAD(P)H-dependent D-xylose reductase xyl1 (xyl1), found in Aspergillus niger (strain ATCC MYA-4892 / CBS 513.88 / FGSC A1513).